The following is a 223-amino-acid chain: Putative germin-like protein subfamily 1 member 12 (223 aa).

The signal sequence occupies residues 1–24 (MNMKNLYLAILYLLAASTLPFAIA). C34 and C51 are joined by a disulfide. In terms of domain architecture, Cupin type-1 spans 65-216 (SGLDKARTTE…AFQLDPKVII (152 aa)). N81 carries N-linked (GlcNAc...) asparagine glycosylation. Residues H114, H116, and E121 each coordinate Mn(2+). Residue N145 is glycosylated (N-linked (GlcNAc...) asparagine). H162 is a binding site for Mn(2+).

It belongs to the germin family. As to quaternary structure, oligomer (believed to be a pentamer but probably hexamer).

It localises to the secreted. It is found in the extracellular space. The protein resides in the apoplast. In terms of biological role, may play a role in plant defense. Probably has no oxalate oxidase activity even if the active site is conserved. The polypeptide is Putative germin-like protein subfamily 1 member 12 (Arabidopsis thaliana (Mouse-ear cress)).